A 224-amino-acid polypeptide reads, in one-letter code: 7-cyano-7-deazaguanine synthase (224 aa).

ATP is bound at residue 12-22 (LSGGLDSSTVT). The Zn(2+) site is built by Cys-193, Cys-201, Cys-204, and Cys-207.

This sequence belongs to the QueC family. Zn(2+) serves as cofactor.

The catalysed reaction is 7-carboxy-7-deazaguanine + NH4(+) + ATP = 7-cyano-7-deazaguanine + ADP + phosphate + H2O + H(+). Its pathway is purine metabolism; 7-cyano-7-deazaguanine biosynthesis. Catalyzes the ATP-dependent conversion of 7-carboxy-7-deazaguanine (CDG) to 7-cyano-7-deazaguanine (preQ(0)). The polypeptide is 7-cyano-7-deazaguanine synthase (Prochlorococcus marinus (strain MIT 9215)).